A 195-amino-acid polypeptide reads, in one-letter code: ATP-dependent Clp protease proteolytic subunit (195 aa).

Ser98 (nucleophile) is an active-site residue. His123 is a catalytic residue.

This sequence belongs to the peptidase S14 family. Fourteen ClpP subunits assemble into 2 heptameric rings which stack back to back to give a disk-like structure with a central cavity, resembling the structure of eukaryotic proteasomes.

It localises to the cytoplasm. It carries out the reaction Hydrolysis of proteins to small peptides in the presence of ATP and magnesium. alpha-casein is the usual test substrate. In the absence of ATP, only oligopeptides shorter than five residues are hydrolyzed (such as succinyl-Leu-Tyr-|-NHMec, and Leu-Tyr-Leu-|-Tyr-Trp, in which cleavage of the -Tyr-|-Leu- and -Tyr-|-Trp bonds also occurs).. In terms of biological role, cleaves peptides in various proteins in a process that requires ATP hydrolysis. Has a chymotrypsin-like activity. Plays a major role in the degradation of misfolded proteins. The sequence is that of ATP-dependent Clp protease proteolytic subunit from Staphylococcus aureus (strain Mu3 / ATCC 700698).